We begin with the raw amino-acid sequence, 280 residues long: Bifunctional protein FolD (280 aa).

NADP(+) is bound by residues 164 to 166 (GRS), S189, and V230.

This sequence belongs to the tetrahydrofolate dehydrogenase/cyclohydrolase family. Homodimer.

The catalysed reaction is (6R)-5,10-methylene-5,6,7,8-tetrahydrofolate + NADP(+) = (6R)-5,10-methenyltetrahydrofolate + NADPH. It catalyses the reaction (6R)-5,10-methenyltetrahydrofolate + H2O = (6R)-10-formyltetrahydrofolate + H(+). It functions in the pathway one-carbon metabolism; tetrahydrofolate interconversion. Its function is as follows. Catalyzes the oxidation of 5,10-methylenetetrahydrofolate to 5,10-methenyltetrahydrofolate and then the hydrolysis of 5,10-methenyltetrahydrofolate to 10-formyltetrahydrofolate. This chain is Bifunctional protein FolD, found in Geotalea uraniireducens (strain Rf4) (Geobacter uraniireducens).